The sequence spans 407 residues: Multidrug resistance protein MdtH (407 aa).

10 helical membrane-spanning segments follow: residues 13–33, 88–108, 139–159, 163–183, 210–230, 247–267, 277–297, 298–318, 340–360, and 368–388; these read CFLI…FPLI, LGFI…SCML, VLML…TWLL, FKLV…FNAW, FVIY…VMLM, WMYI…TWWS, LMVG…VKNL, HTLL…EPAR, LSLA…YDIG, and LPWI…YCQF.

The protein belongs to the major facilitator superfamily. DHA1 family. MdtH (TC 2.A.1.2.21) subfamily.

It localises to the cell inner membrane. In Blochmanniella pennsylvanica (strain BPEN), this protein is Multidrug resistance protein MdtH.